Here is a 121-residue protein sequence, read N- to C-terminus: uncharacterized protein (121 aa).

Residue 77-84 (AALSFGKT) participates in ATP binding.

This is an uncharacterized protein from Saccharomyces cerevisiae (strain ATCC 204508 / S288c) (Baker's yeast).